The following is a 236-amino-acid chain: Carbonyl reductase family member 4 (236 aa).

NADP(+)-binding positions include serine 11–isoleucine 14, arginine 34–aspartate 35, aspartate 55, and serine 82–glycine 84. Serine 134 lines the substrate pocket. Residues tyrosine 147, lysine 151, and isoleucine 180–threonine 182 contribute to the NADP(+) site. Tyrosine 147 acts as the Proton acceptor in catalysis.

It belongs to the short-chain dehydrogenases/reductases (SDR) family. As to quaternary structure, homotetramer (in vitro). Heterotetramer with HSD17B8; contains two molecules each of HSD17B8 and CBR4.

Its subcellular location is the mitochondrion matrix. It participates in lipid metabolism; fatty acid biosynthesis. Its function is as follows. The heterotetramer with HSD17B8 has NADH-dependent 3-ketoacyl-acyl carrier protein reductase activity, and thereby plays a role in mitochondrial fatty acid biosynthesis. Within the heterotetramer, HSD17B8 binds NADH; CBR4 binds NADPD. The homotetramer has NADPH-dependent quinone reductase activity. Both homotetramer and the heterotetramer have broad in vitro substrate specificity and can reduce 9,10-phenanthrenequinone, 1,4-benzoquinone and various other o-quinones and p-quinones. The polypeptide is Carbonyl reductase family member 4 (cbr4) (Xenopus tropicalis (Western clawed frog)).